Reading from the N-terminus, the 145-residue chain is MKLLLLLLVVMASDLPQAHGHLKQFTEMIKLTTGKNGLTSYGAYGCHCGVGGKGTPKDATDRCCVRHDCCYDRLMKRGCGTKFLNYRFTHKGSSITCSVKQNSCQKQLCECDKAAAYCFAANLKSYSRRYQFYYNGLCRGKTPSC.

The first 20 residues, 1-20 (MKLLLLLLVVMASDLPQAHG), serve as a signal peptide directing secretion. Cystine bridges form between Cys-46-Cys-138, Cys-48-Cys-64, Cys-63-Cys-118, Cys-69-Cys-145, Cys-70-Cys-111, Cys-79-Cys-104, and Cys-97-Cys-109. His-47, Gly-49, and Gly-51 together coordinate Ca(2+). His-67 is an active-site residue. Asp-68 is a Ca(2+) binding site. The active site involves Asp-112.

This sequence belongs to the phospholipase A2 family. Ca(2+) serves as cofactor. In terms of tissue distribution, alveolar macrophages, and at much lower levels in peripheral blood monocytes and peritoneal macrophages.

The protein localises to the secreted. It is found in the cell membrane. It localises to the mitochondrion outer membrane. The catalysed reaction is a 1,2-diacyl-sn-glycero-3-phosphoethanolamine + H2O = a 1-acyl-sn-glycero-3-phosphoethanolamine + a fatty acid + H(+). It carries out the reaction 1-hexadecanoyl-2-(9Z-octadecenoyl)-sn-glycero-3-phosphoethanolamine + H2O = 1-hexadecanoyl-sn-glycero-3-phosphoethanolamine + (9Z)-octadecenoate + H(+). It catalyses the reaction 1-hexadecanoyl-2-(9Z,12Z-octadecadienoyl)-sn-glycero-3-phosphoethanolamine + H2O = 1-hexadecanoyl-sn-glycero-3-phosphoethanolamine + (9Z,12Z)-octadecadienoate + H(+). The enzyme catalyses 1-hexadecanoyl-2-(5Z,8Z,11Z,14Z-eicosatetraenoyl)-sn-glycero-3-phosphoethanolamine + H2O = 1-hexadecanoyl-sn-glycero-3-phosphoethanolamine + (5Z,8Z,11Z,14Z)-eicosatetraenoate + H(+). The catalysed reaction is N-hexadecanoyl-1,2-di-(9Z-octadecenoyl)-sn-glycero-3-phosphoethanolamine + H2O = N-hexadecanoyl-1-(9Z-octadecenoyl)-sn-glycero-3-phosphoethanolamine + (9Z)-octadecenoate + H(+). It carries out the reaction 1,2-dihexadecanoyl-sn-glycero-3-phospho-(1'-sn-glycerol) + H2O = 1-hexadecanoyl-sn-glycero-3-phospho-(1'-sn-glycerol) + hexadecanoate + H(+). It catalyses the reaction 1-hexadecanoyl-2-(9Z-octadecenoyl)-sn-glycero-3-phosphoglycerol + H2O = 1-hexadecanoyl-sn-glycero-3-phosphoglycerol + (9Z)-octadecenoate + H(+). The enzyme catalyses 1-hexadecanoyl-2-(9Z-octadecenoyl)-sn-glycero-3-phospho-(1'-sn-glycerol) + H2O = 1-hexadecanoyl-sn-glycero-3-phospho-(1'-sn-glycerol) + (9Z)-octadecenoate + H(+). The catalysed reaction is a 1,2-diacyl-sn-glycero-3-phosphocholine + H2O = a 1-acyl-sn-glycero-3-phosphocholine + a fatty acid + H(+). It carries out the reaction 1,2-dihexadecanoyl-sn-glycero-3-phosphocholine + H2O = 1-hexadecanoyl-sn-glycero-3-phosphocholine + hexadecanoate + H(+). It catalyses the reaction 1-hexadecanoyl-2-(9Z-octadecenoyl)-sn-glycero-3-phosphocholine + H2O = 1-hexadecanoyl-sn-glycero-3-phosphocholine + (9Z)-octadecenoate + H(+). The enzyme catalyses 1-hexadecanoyl-2-(9Z,12Z-octadecadienoyl)-sn-glycero-3-phosphocholine + H2O = (9Z,12Z)-octadecadienoate + 1-hexadecanoyl-sn-glycero-3-phosphocholine + H(+). The catalysed reaction is 1-hexadecanoyl-2-(4Z,7Z,10Z,13Z,16Z,19Z-docosahexaenoyl)-sn-glycero-3-phosphocholine + H2O = (4Z,7Z,10Z,13Z,16Z,19Z)-docosahexaenoate + 1-hexadecanoyl-sn-glycero-3-phosphocholine + H(+). Functionally, secretory calcium-dependent phospholipase A2 that primarily targets extracellular phospholipids with implications in host antimicrobial defense, inflammatory response and tissue regeneration. Hydrolyzes the ester bond of the fatty acyl group attached at sn-2 position of phospholipids (phospholipase A2 activity) with preference for phosphatidylethanolamines and phosphatidylglycerols over phosphatidylcholines. Contributes to lipid remodeling of cellular membranes and generation of lipid mediators involved in pathogen clearance. Displays bactericidal activity against Gram-positive bacteria by directly hydrolyzing phospholipids of the bacterial membrane. Upon sterile inflammation, targets membrane phospholipids of extracellular mitochondria released from activated platelets, generating free unsaturated fatty acids such as arachidonate that is used by neighboring leukocytes to synthesize inflammatory eicosanoids such as leukotrienes. Simultaneously, by compromising mitochondrial membrane integrity, promotes the release in circulation of potent damage-associated molecular pattern molecules that activate the innate immune response. Plays a stem cell regulator role in the intestinal crypt. Within intracellular compartment mediates Paneth cell differentiation and its stem cell supporting functions by inhibiting Wnt signaling pathway in intestinal stem cell (ICS). Secreted in the intestinal lumen upon inflammation, acts in an autocrine way and promotes prostaglandin E2 synthesis that stimulates Wnt signaling pathway in ICS cells and tissue regeneration. May play a role in the biosynthesis of N-acyl ethanolamines that regulate energy metabolism and inflammation. Hydrolyzes N-acyl phosphatidylethanolamines to N-acyl lysophosphatidylethanolamines, which are further cleaved by a lysophospholipase D to release N-acyl ethanolamines. Independent of its catalytic activity, acts as a ligand for integrins. Binds to and activates integrins ITGAV:ITGB3, ITGA4:ITGB1 and ITGA5:ITGB1. Binds to a site (site 2) which is distinct from the classical ligand-binding site (site 1) and induces integrin conformational changes and enhanced ligand binding to site 1. Induces cell proliferation in an integrin-dependent manner. In Cavia porcellus (Guinea pig), this protein is Phospholipase A2, membrane associated (PLA2G2A).